A 480-amino-acid chain; its full sequence is Glutamate--tRNA ligase (480 aa).

A 'HIGH' region motif is present at residues 9 to 19 (PSPTGNLHIGT). The 'KMSKS' region motif lies at 250–254 (KLSKR). K253 contacts ATP.

The protein belongs to the class-I aminoacyl-tRNA synthetase family. Glutamate--tRNA ligase type 1 subfamily. Monomer.

The protein localises to the cytoplasm. The catalysed reaction is tRNA(Glu) + L-glutamate + ATP = L-glutamyl-tRNA(Glu) + AMP + diphosphate. In terms of biological role, catalyzes the attachment of glutamate to tRNA(Glu) in a two-step reaction: glutamate is first activated by ATP to form Glu-AMP and then transferred to the acceptor end of tRNA(Glu). The polypeptide is Glutamate--tRNA ligase (Microcystis aeruginosa (strain NIES-843 / IAM M-2473)).